The following is a 287-amino-acid chain: Shikimate kinase 3, chloroplastic (287 aa).

Residues 1–57 (MDAGVGLRAKPGAWAGLGNPRRSSTARVPVRFAVEKFAQPLVLGSDRRSCGAKLKVS) constitute a chloroplast transit peptide. 98-105 (GMMGSGKT) provides a ligand contact to ATP. Position 105 (T105) interacts with Mg(2+). Positions 123, 148, and 170 each coordinate substrate. R209 serves as a coordination point for ATP.

This sequence belongs to the shikimate kinase family. The cofactor is Mg(2+). As to expression, expressed in panicles.

It is found in the plastid. It localises to the chloroplast. The catalysed reaction is shikimate + ATP = 3-phosphoshikimate + ADP + H(+). The protein operates within metabolic intermediate biosynthesis; chorismate biosynthesis; chorismate from D-erythrose 4-phosphate and phosphoenolpyruvate: step 5/7. Catalyzes the specific phosphorylation of the 3-hydroxyl group of shikimic acid using ATP as a cosubstrate. In Oryza sativa subsp. japonica (Rice), this protein is Shikimate kinase 3, chloroplastic (SK3).